The chain runs to 589 residues: Phenylalanine--tRNA ligase beta subunit (589 aa).

Positions 290–368 (LNPTCFKADI…IAYGYDNLKH (79 aa)) constitute a B5 domain. Positions 346, 352, 355, and 356 each coordinate Mg(2+).

It belongs to the phenylalanyl-tRNA synthetase beta subunit family. Type 2 subfamily. As to quaternary structure, tetramer of two alpha and two beta subunits. Mg(2+) serves as cofactor.

The protein resides in the cytoplasm. It is found in the nucleus. It catalyses the reaction tRNA(Phe) + L-phenylalanine + ATP = L-phenylalanyl-tRNA(Phe) + AMP + diphosphate + H(+). This is Phenylalanine--tRNA ligase beta subunit (frs1) from Schizosaccharomyces pombe (strain 972 / ATCC 24843) (Fission yeast).